We begin with the raw amino-acid sequence, 234 residues long: Sugar fermentation stimulation protein A (234 aa).

The H-T-H motif DNA-binding region spans 201–220 (LLSEAQQRGVEILAYKAELS).

The protein belongs to the SfsA family.

Functionally, binds to DNA non-specifically. Could be a regulatory factor involved in maltose metabolism. In Escherichia coli O127:H6 (strain E2348/69 / EPEC), this protein is Sugar fermentation stimulation protein A.